The following is a 402-amino-acid chain: S-adenosylmethionine synthase (402 aa).

His15 is a binding site for ATP. Position 17 (Asp17) interacts with Mg(2+). Glu43 is a K(+) binding site. Positions 56 and 99 each coordinate L-methionine. Positions 99-109 (QSPDIAQGVDT) are flexible loop. Residues 174-176 (DGK), 247-248 (RF), Asp256, 262-263 (RK), Ala279, and Lys283 each bind ATP. Asp256 provides a ligand contact to L-methionine. Position 287 (Lys287) interacts with L-methionine.

This sequence belongs to the AdoMet synthase family. In terms of assembly, homotetramer; dimer of dimers. It depends on Mg(2+) as a cofactor. K(+) is required as a cofactor.

It is found in the cytoplasm. The enzyme catalyses L-methionine + ATP + H2O = S-adenosyl-L-methionine + phosphate + diphosphate. It functions in the pathway amino-acid biosynthesis; S-adenosyl-L-methionine biosynthesis; S-adenosyl-L-methionine from L-methionine: step 1/1. Catalyzes the formation of S-adenosylmethionine (AdoMet) from methionine and ATP. The overall synthetic reaction is composed of two sequential steps, AdoMet formation and the subsequent tripolyphosphate hydrolysis which occurs prior to release of AdoMet from the enzyme. The protein is S-adenosylmethionine synthase of Streptomyces avermitilis (strain ATCC 31267 / DSM 46492 / JCM 5070 / NBRC 14893 / NCIMB 12804 / NRRL 8165 / MA-4680).